A 469-amino-acid chain; its full sequence is Putative dipeptidase SAB1611c (469 aa).

Position 84 (His84) interacts with Zn(2+). The active site involves Asp86. Asp115 contributes to the Zn(2+) binding site. The active-site Proton acceptor is Glu149. Residues Glu150, Asp173, and His440 each contribute to the Zn(2+) site.

Belongs to the peptidase M20A family. Zn(2+) serves as cofactor.

In Staphylococcus aureus (strain bovine RF122 / ET3-1), this protein is Putative dipeptidase SAB1611c.